The sequence spans 75 residues: Small ribosomal subunit protein bS18 (75 aa).

This sequence belongs to the bacterial ribosomal protein bS18 family. As to quaternary structure, part of the 30S ribosomal subunit. Forms a tight heterodimer with protein bS6.

Its function is as follows. Binds as a heterodimer with protein bS6 to the central domain of the 16S rRNA, where it helps stabilize the platform of the 30S subunit. This Ruegeria sp. (strain TM1040) (Silicibacter sp.) protein is Small ribosomal subunit protein bS18.